Consider the following 669-residue polypeptide: Dymeclin (669 aa).

Residue Gly2 is the site of N-myristoyl glycine attachment.

The protein belongs to the dymeclin family. In terms of processing, myristoylated in vitro; myristoylation is not essential for protein targeting to Golgi compartment.

It localises to the cytoplasm. Its subcellular location is the golgi apparatus. Functionally, necessary for correct organization of Golgi apparatus. The chain is Dymeclin (DYM) from Gallus gallus (Chicken).